The chain runs to 31 residues: Cyclotide psybry C (31 aa).

The cyclopeptide (Gly-Asn) cross-link spans 1-31 (GFNPCGETCQIDQTCHAPGCTCSIANICVRN). Intrachain disulfides connect Cys-5-Cys-20, Cys-9-Cys-22, and Cys-15-Cys-28.

Post-translationally, this is a cyclic peptide.

Functionally, probably participates in a plant defense mechanism. This Psychotria brachyceras protein is Cyclotide psybry C.